The chain runs to 510 residues: NAD(P)H-quinone oxidoreductase subunit 2 B, chloroplastic (510 aa).

13 helical membrane-spanning segments follow: residues 24 to 44 (LLLF…GLIL), 57 to 77 (IPWL…ALLF), 99 to 119 (IFQF…VEYI), 124 to 144 (MAIT…MFLC), 150 to 170 (ITIF…SGYT), 183 to 203 (YLLM…WLYG), 227 to 247 (PGIS…LSPA), 295 to 315 (WHLL…LIAI), 323 to 343 (MLAY…IVGD), 347 to 367 (GYAS…GTFA), 395 to 415 (ALSS…AGFF), 418 to 438 (LHLF…IGLL), and 484 to 504 (MIVC…IIAI).

It belongs to the complex I subunit 2 family. In terms of assembly, NDH is composed of at least 16 different subunits, 5 of which are encoded in the nucleus.

It is found in the plastid. Its subcellular location is the chloroplast thylakoid membrane. It carries out the reaction a plastoquinone + NADH + (n+1) H(+)(in) = a plastoquinol + NAD(+) + n H(+)(out). The enzyme catalyses a plastoquinone + NADPH + (n+1) H(+)(in) = a plastoquinol + NADP(+) + n H(+)(out). Its function is as follows. NDH shuttles electrons from NAD(P)H:plastoquinone, via FMN and iron-sulfur (Fe-S) centers, to quinones in the photosynthetic chain and possibly in a chloroplast respiratory chain. The immediate electron acceptor for the enzyme in this species is believed to be plastoquinone. Couples the redox reaction to proton translocation, and thus conserves the redox energy in a proton gradient. The sequence is that of NAD(P)H-quinone oxidoreductase subunit 2 B, chloroplastic from Chloranthus spicatus (Chulantree).